The sequence spans 544 residues: Cytochrome P450 monooxygenase verL (544 aa).

A helical membrane pass occupies residues 3–23 (VALFPILPIGCLLIYIIFKLW). Residue C446 coordinates heme. Residues 520–544 (QEKGIDGWKGKKESSSEENRGVSSR) form a disordered region.

This sequence belongs to the cytochrome P450 family. Heme is required as a cofactor.

The protein resides in the membrane. The protein operates within mycotoxin biosynthesis. Functionally, cytochrome P450 monooxygenase; part of the gene cluster that mediates the biosynthesis of 11'-deoxyverticillin A, one of the dimeric epipolythiodioxopiperazines (ETPs) from the verticillin family that act as mycotoxins. 11'-deoxyverticillin A is required for normal conidiation. The nonribosomal peptide synthetase verP is speculated to be responsible for condensation of amino acids to form the carbon skeleton of verticillin, whereas the cluster-specific tailoring enzymes are involved in further modifications leading to the production of 11'-deoxyverticillin A. The protein is Cytochrome P450 monooxygenase verL of Clonostachys rogersoniana.